A 706-amino-acid polypeptide reads, in one-letter code: MAKISTQYSHPTRTHPSVRTMDRDLDCIENGLSRTHLPCEETSSELQEGIAMETRGLAESRQSSFTSQGPTRLSRLIISLRAWSARHLHQEDQRPDSFLERFRGAELQEVSSRESHVQFNVGSQEPPDRGRSAWPLARNNTNTCNNSEKDDKAKKEEKEKKEEKKENPKKEEKKKDSVVMDPSSNMYYHWLTVIAVPVFYNWCLLVCRACFDELQSEHLMLWLVLDYSADILYGMDMLVRARTGFLEQGLMVMDASRLWKHYTQTLHFKLDVLSLVPTDLAYFKLGMNYPELRFNRLLKLARLFEFFDRTETRTNYPNMFRIGNLVLYILIIIHWNACIYFAISKFIGFGTDSWVYPNVSNPEYGRLSRKYIYSLYWSTLTLTTIGETPPPVKDEEYLFVVIDFLVGVLIFATIVGNVGSMISNMNASRAEFQAKIDSIKQYMQFRKVTKDLETRVIRWFDYLWANKKTVDEKEVLKSLPDKLKAEIAINVHLDTLRKVRIFQDCEAGLLVELVLKLRPAVFSPGDYICKKGDIGREMYIIKEGKLAVVAEDGITQFVVLGDGSYFGEISILNIKGSKSGNRRTANIRSIGYSDLFCLSKDDLMEALTEYPEAKKALEEKGRQILMKDNLIDEELAKAGADPKDIEEKVEHLETSLDSLQTRFARLLAEYNATQMKVKQRLSQLESQVKMGLPPDGDAPQTEASQP.

The Cytoplasmic segment spans residues 1-189 (MAKISTQYSH…MDPSSNMYYH (189 aa)). Positions 113–177 (RESHVQFNVG…PKKEEKKKDS (65 aa)) are disordered. The segment covering 147–177 (SEKDDKAKKEEKEKKEEKKENPKKEEKKKDS) has biased composition (basic and acidic residues). The helical transmembrane segment at 190–211 (WLTVIAVPVFYNWCLLVCRACF) threads the bilayer. Residues 212–217 (DELQSE) lie on the Extracellular side of the membrane. A helical transmembrane segment spans residues 218-238 (HLMLWLVLDYSADILYGMDML). Residues 239–265 (VRARTGFLEQGLMVMDASRLWKHYTQT) are Cytoplasmic-facing. Residues 266–285 (LHFKLDVLSLVPTDLAYFKL) traverse the membrane as a helical segment. Topologically, residues 286–289 (GMNY) are extracellular. A helical transmembrane segment spans residues 290-307 (PELRFNRLLKLARLFEFF). Topologically, residues 308 to 317 (DRTETRTNYP) are cytoplasmic. The segment at 317–425 (PNMFRIGNLV…GNVGSMISNM (109 aa)) is ion conduction pathway. Residues 318–340 (NMFRIGNLVLYILIIIHWNACIY) form a helical membrane-spanning segment. At 341 to 366 (FAISKFIGFGTDSWVYPNVSNPEYGR) the chain is on the extracellular side. N358 carries an N-linked (GalNAc...) asparagine glycan. A run of 2 helical transmembrane segments spans residues 367 to 397 (LSRKYIYSLYWSTLTLTTIGETPPPVKDEEY) and 398 to 422 (LFVVIDFLVGVLIFATIVGNVGSMI). Residues 384 to 387 (TIGE) form a selectivity filter region. Residues 423-706 (SNMNASRAEF…DAPQTEASQP (284 aa)) lie on the Cytoplasmic side of the membrane. The C-linker stretch occupies residues 427–504 (ASRAEFQAKI…TLRKVRIFQD (78 aa)). A cyclic nucleotide-binding domain region spans residues 507-627 (AGLLVELVLK…EEKGRQILMK (121 aa)). 3',5'-cyclic GMP-binding residues include G567, E568, S570, R583, T584, and D628. A coiled-coil region spans residues 645-688 (IEEKVEHLETSLDSLQTRFARLLAEYNATQMKVKQRLSQLESQV). The disordered stretch occupies residues 685-706 (ESQVKMGLPPDGDAPQTEASQP).

This sequence belongs to the cyclic nucleotide-gated cation channel (TC 1.A.1.5) family. CNGA3 subfamily. Forms heterotetrameric channels composed of CNGA3 and CNGB3 subunits with 3:1 stoichiometry. Testis, kidney, retinal cone (at protein level) and heart.

It localises to the cell membrane. It catalyses the reaction Ca(2+)(in) = Ca(2+)(out). The enzyme catalyses Na(+)(in) = Na(+)(out). It carries out the reaction K(+)(in) = K(+)(out). The catalysed reaction is NH4(+)(in) = NH4(+)(out). It catalyses the reaction Rb(+)(in) = Rb(+)(out). The enzyme catalyses Li(+)(in) = Li(+)(out). It carries out the reaction Cs(+)(in) = Cs(+)(out). With respect to regulation, ca(2+) influx is inhibited by extracellular Mg(2+) ions. In terms of biological role, pore-forming subunit of the cone cyclic nucleotide-gated channel. Mediates cone photoresponses at bright light converting transient changes in intracellular cGMP levels into electrical signals. In the dark, cGMP levels are high and keep the channel open enabling a steady inward current carried by Na(+) and Ca(2+) ions that leads to membrane depolarization and neurotransmitter release from synaptic terminals. Upon photon absorption cGMP levels decline leading to channel closure and membrane hyperpolarization that ultimately slows neurotransmitter release and signals the presence of light, the end point of the phototransduction cascade. Pore-forming subunit of the gustatory cyclic nucleotide-gated channel. In the taste buds, may sense oral extracellular pH and conduct ion currents that modulate the excitability of taste cells. Conducts cGMP- and cAMP-gated ion currents, with permeability for monovalent and divalent cations. The chain is Cyclic nucleotide-gated channel alpha-3 from Bos taurus (Bovine).